Reading from the N-terminus, the 508-residue chain is MILVLDFGSQYTQLIARRLRESGIYAEIVPFFESVENIQKKAPKGLILSGGPASVYAKDAYKPSEKIFDLNLPILGICYGMQYLVDFFGGVVAYANEQEFGKAILEIVQNSVIFEGVKIKSLVWMSHMDKVIELPKGFTTLAKSPNSPYCAIESDKIFGLQFHPEVIQSEEGGKILENFALLVCGCEKTWGMQHFAQREIVRLKEKIANAKVLCAVSGGVDSTVVATLLHRAIKDNLIAVFVDHGLLRKNEKEKVQAMFKDLQIPLNTIDAKEVFLSKLKGVSEPELKRKIIGETFIEVFEKEAKKHHLKGKIEFLAQGTLYPDVIESVSVKGPSKVIKTHHNVGGLPEWMDFKLIEPLRELFKDEVRLLGKELGVSQDFLMRHPFPGPGLAIRILGEINENKIKRLQEADAIFIEELKKANLYDKVWQAFCVLLNVNSVGVMGDNRTYENAICLRAVNASDGMTASFSFLEHSFLEKVSNRITNEVNGINRVVYDITSKPPGTIEWE.

One can recognise a Glutamine amidotransferase type-1 domain in the interval 1 to 189 (MILVLDFGSQ…ALLVCGCEKT (189 aa)). Cys-78 (nucleophile) is an active-site residue. Active-site residues include His-163 and Glu-165. The GMPS ATP-PPase domain maps to 190–383 (WGMQHFAQRE…LGVSQDFLMR (194 aa)). Residue 217 to 223 (SGGVDST) coordinates ATP.

As to quaternary structure, homodimer.

It carries out the reaction XMP + L-glutamine + ATP + H2O = GMP + L-glutamate + AMP + diphosphate + 2 H(+). The protein operates within purine metabolism; GMP biosynthesis; GMP from XMP (L-Gln route): step 1/1. Its function is as follows. Catalyzes the synthesis of GMP from XMP. The protein is GMP synthase [glutamine-hydrolyzing] (guaA) of Helicobacter pylori (strain J99 / ATCC 700824) (Campylobacter pylori J99).